The following is a 167-amino-acid chain: MALGLEDKKAIVAEVNEAAKIALSAVVANSRGVTVGKMNALRAQARAEGVNLRLVRNTLARRALEGTDFACLADLFIGPTILAFSNEHPGAAARLLKDFAKANDQFEIKGLAFEGEFIEAAQLDRLATLPTYDEAIAQLMATMKEAAAGKLVRTLAAIRDQKEESAA.

It belongs to the universal ribosomal protein uL10 family. In terms of assembly, part of the ribosomal stalk of the 50S ribosomal subunit. The N-terminus interacts with L11 and the large rRNA to form the base of the stalk. The C-terminus forms an elongated spine to which L12 dimers bind in a sequential fashion forming a multimeric L10(L12)X complex.

Its function is as follows. Forms part of the ribosomal stalk, playing a central role in the interaction of the ribosome with GTP-bound translation factors. The protein is Large ribosomal subunit protein uL10 of Psychromonas ingrahamii (strain DSM 17664 / CCUG 51855 / 37).